The chain runs to 245 residues: Orotidine 5'-phosphate decarboxylase (245 aa).

Substrate-binding positions include aspartate 22, lysine 44, 71-80 (DLKFHDIPNT), threonine 131, arginine 192, glutamine 201, glycine 221, and arginine 222. Lysine 73 (proton donor) is an active-site residue.

The protein belongs to the OMP decarboxylase family. Type 1 subfamily. As to quaternary structure, homodimer.

The catalysed reaction is orotidine 5'-phosphate + H(+) = UMP + CO2. It participates in pyrimidine metabolism; UMP biosynthesis via de novo pathway; UMP from orotate: step 2/2. Catalyzes the decarboxylation of orotidine 5'-monophosphate (OMP) to uridine 5'-monophosphate (UMP). This Escherichia coli O139:H28 (strain E24377A / ETEC) protein is Orotidine 5'-phosphate decarboxylase.